Consider the following 79-residue polypeptide: RNA-binding protein Hfq (79 aa).

In terms of domain architecture, Sm spans 10 to 70 (DVFLKTVRKQ…ISTIMPGQPI (61 aa)).

This sequence belongs to the Hfq family. As to quaternary structure, homohexamer.

RNA chaperone that binds small regulatory RNA (sRNAs) and mRNAs to facilitate mRNA translational regulation in response to envelope stress, environmental stress and changes in metabolite concentrations. Also binds with high specificity to tRNAs. The sequence is that of RNA-binding protein Hfq from Bartonella bacilliformis (strain ATCC 35685 / KC583 / Herrer 020/F12,63).